A 292-amino-acid polypeptide reads, in one-letter code: Elongation factor Ts (292 aa).

An involved in Mg(2+) ion dislocation from EF-Tu region spans residues 82–85 (TDFV).

Belongs to the EF-Ts family.

It localises to the cytoplasm. Associates with the EF-Tu.GDP complex and induces the exchange of GDP to GTP. It remains bound to the aminoacyl-tRNA.EF-Tu.GTP complex up to the GTP hydrolysis stage on the ribosome. This chain is Elongation factor Ts, found in Bordetella parapertussis (strain 12822 / ATCC BAA-587 / NCTC 13253).